The primary structure comprises 388 residues: Alcohol dehydrogenase-like 1 (388 aa).

C53, T55, H76, C106, C109, C112, C120, and C185 together coordinate Zn(2+). The an alcohol site is built by T55 and H76. T55 is a binding site for NAD(+). Residues G210–G215, D234, K239, L304–M306, F331, and R381 contribute to the NAD(+) site.

Belongs to the zinc-containing alcohol dehydrogenase family. Class-III subfamily. In terms of assembly, homodimer. The cofactor is Zn(2+).

Its subcellular location is the cytoplasm. It carries out the reaction a primary alcohol + NAD(+) = an aldehyde + NADH + H(+). It catalyses the reaction a secondary alcohol + NAD(+) = a ketone + NADH + H(+). This Arabidopsis thaliana (Mouse-ear cress) protein is Alcohol dehydrogenase-like 1.